A 255-amino-acid polypeptide reads, in one-letter code: Transmembrane protein 81 (255 aa).

An N-terminal signal peptide occupies residues 1–30 (MKVLATSFVLGSLGLAFYLPLVVTTPKTLA). Residues 31-226 (IPEKLQEAVG…HPKWKKKVAS (196 aa)) are Extracellular-facing. N45 carries N-linked (GlcNAc...) asparagine glycosylation. One can recognise an Ig-like domain in the interval 83–171 (TNWICGMLHF…VQLVKNLRLV (89 aa)). C104 and C160 are oxidised to a cystine. A helical transmembrane segment spans residues 227–247 (ALGIGIAIGVVGGVLVRIVLC). The Cytoplasmic portion of the chain corresponds to 248-255 (ALRGGLQQ).

In terms of assembly, forms a complex with IZUMO1 and SPACA6 on spermatocyte cell membrane required for fertilization. In terms of tissue distribution, highly expressed in sperm (at protein level).

The protein localises to the cell membrane. In terms of biological role, essential fertilization factor required for male fertility. Part of a conserved trimeric sperm complex with the essential fertilization factors IZUMO1 and SPACA6 which bridges sperm and oocyte membranes during fertilization by binding to IZUMO1R/JUNO on the oocyte. This is Transmembrane protein 81 from Homo sapiens (Human).